We begin with the raw amino-acid sequence, 147 residues long: Lysozyme C (147 aa).

A signal peptide spans 1 to 18; sequence MKVLLLLGFIFCSMAAHG. Residues 19-147 enclose the C-type lysozyme domain; sequence KRMERCEFAR…LSKYLEGCHL (129 aa). Cystine bridges form between C24/C145, C48/C133, C83/C99, and C95/C113. Active-site residues include E53 and D71.

The protein belongs to the glycosyl hydrolase 22 family. Monomer.

The protein localises to the secreted. The catalysed reaction is Hydrolysis of (1-&gt;4)-beta-linkages between N-acetylmuramic acid and N-acetyl-D-glucosamine residues in a peptidoglycan and between N-acetyl-D-glucosamine residues in chitodextrins.. Its function is as follows. Lysozymes have primarily a bacteriolytic function; those in tissues and body fluids are associated with the monocyte-macrophage system and enhance the activity of immunoagents. In Trichosurus vulpecula (Brush-tailed possum), this protein is Lysozyme C (LYZ).